Consider the following 209-residue polypeptide: Uracil phosphoribosyltransferase (209 aa).

5-phospho-alpha-D-ribose 1-diphosphate-binding positions include Arg77, Arg102, and 129–137; that span reads DPMLATGVS. Uracil-binding positions include Ile192 and 197–199; that span reads GDA. Asp198 is a binding site for 5-phospho-alpha-D-ribose 1-diphosphate.

This sequence belongs to the UPRTase family. It depends on Mg(2+) as a cofactor.

The enzyme catalyses UMP + diphosphate = 5-phospho-alpha-D-ribose 1-diphosphate + uracil. It participates in pyrimidine metabolism; UMP biosynthesis via salvage pathway; UMP from uracil: step 1/1. Its activity is regulated as follows. Allosterically activated by GTP. Its function is as follows. Catalyzes the conversion of uracil and 5-phospho-alpha-D-ribose 1-diphosphate (PRPP) to UMP and diphosphate. This chain is Uracil phosphoribosyltransferase, found in Metamycoplasma arthritidis (strain 158L3-1) (Mycoplasma arthritidis).